The following is a 367-amino-acid chain: Methylthioribose-1-phosphate isomerase (367 aa).

Substrate contacts are provided by residues 54–56 (RGA), Arg91, and Gln201. The Proton donor role is filled by Asp242. 252–253 (NK) serves as a coordination point for substrate.

This sequence belongs to the eIF-2B alpha/beta/delta subunits family. MtnA subfamily.

It catalyses the reaction 5-(methylsulfanyl)-alpha-D-ribose 1-phosphate = 5-(methylsulfanyl)-D-ribulose 1-phosphate. Its pathway is amino-acid biosynthesis; L-methionine biosynthesis via salvage pathway; L-methionine from S-methyl-5-thio-alpha-D-ribose 1-phosphate: step 1/6. Its function is as follows. Catalyzes the interconversion of methylthioribose-1-phosphate (MTR-1-P) into methylthioribulose-1-phosphate (MTRu-1-P). In Acidiphilium cryptum (strain JF-5), this protein is Methylthioribose-1-phosphate isomerase.